Consider the following 181-residue polypeptide: Acireductone dioxygenase (181 aa).

Residues H97, H99, E103, and H141 each coordinate Fe(2+). Residues H97, H99, E103, and H141 each coordinate Ni(2+).

It belongs to the acireductone dioxygenase (ARD) family. As to quaternary structure, monomer. Requires Fe(2+) as cofactor. Ni(2+) is required as a cofactor.

It catalyses the reaction 1,2-dihydroxy-5-(methylsulfanyl)pent-1-en-3-one + O2 = 3-(methylsulfanyl)propanoate + CO + formate + 2 H(+). It carries out the reaction 1,2-dihydroxy-5-(methylsulfanyl)pent-1-en-3-one + O2 = 4-methylsulfanyl-2-oxobutanoate + formate + 2 H(+). The protein operates within amino-acid biosynthesis; L-methionine biosynthesis via salvage pathway; L-methionine from S-methyl-5-thio-alpha-D-ribose 1-phosphate: step 5/6. Functionally, catalyzes 2 different reactions between oxygen and the acireductone 1,2-dihydroxy-3-keto-5-methylthiopentene (DHK-MTPene) depending upon the metal bound in the active site. Fe-containing acireductone dioxygenase (Fe-ARD) produces formate and 2-keto-4-methylthiobutyrate (KMTB), the alpha-ketoacid precursor of methionine in the methionine recycle pathway. Ni-containing acireductone dioxygenase (Ni-ARD) produces methylthiopropionate, carbon monoxide and formate, and does not lie on the methionine recycle pathway. This chain is Acireductone dioxygenase, found in Pseudomonas fluorescens (strain ATCC BAA-477 / NRRL B-23932 / Pf-5).